We begin with the raw amino-acid sequence, 333 residues long: Fatty acid hydroxylase domain-containing protein 2 (333 aa).

6 helical membrane passes run 29–49 (FILG…TWHL), 77–97 (ILFF…FNGL), 134–154 (TVLF…YPFL), 168–188 (FHWF…LFYY), 215–235 (VISL…PAIV), and 237–257 (PLVM…ALII). The Fatty acid hydroxylase domain occupies 176-299 (AIFTLIEEVL…LGVLDHLHGT (124 aa)).

This sequence belongs to the sterol desaturase family.

Its subcellular location is the cytoplasm. It localises to the membrane. Functionally, promotes megakaryocyte differentiation by enhancing ERK phosphorylation and up-regulating RUNX1 expression. The polypeptide is Fatty acid hydroxylase domain-containing protein 2 (FAXDC2) (Macaca fascicularis (Crab-eating macaque)).